A 644-amino-acid polypeptide reads, in one-letter code: MGRRRAPGGGSLGRVLIRQQTQRSRSHRHTDSWLHTSELNDGYDWGRLNLQSVTEQSSLEDFLATAELAGTEFVAEKLNIKFVPPEARTGLLSFEESQRIKKLHEENRQFLCIPRRPNWDRKTSPEELKQAEKDNFLKWRRQLVRLEEEQKLILTPFERNLDFWRQLWRVIERSDIVVQIVDARNPLLFRCEDLECYVKEIDAAKENVILINKADLLTAEQRFAWAVHFEKEGVKVIFWSALAETDHLNGDLKEEVDSVAGDTNKTESESSSLDANEIPHRDLISLSEESASDSGDSKYEDCQEDEEEDWQTCSEEDSVPEEEEGCNADSETQNRKNAENQQVNNDSYLVSKQELLELFKKLHTGKKVKDGQLTVGLVGYPNVGKSSTINTIMGNKKVSVSATPGHTKHFQTLYVEPGLCLCDCPGLVMPSFVSTKAEMICNGILPIDQMRDHVPPVSLVCQNIPRRVLEVTYGINIIKPREDEDPYRPPTSEELLTAYGCMRGFMTAHGQPDQPRSARYILKDYVGGKLLYCHPPPGKDPVAFQHQHQQLLESKVKGGELRLQPGKGRKAKQIENVVDKTFFHQENVRALTKGVQAVMGYKPGHGLVTAAAASAENVPGKPWKKHGNRNKKEKSRRLYKHLDV.

The disordered stretch occupies residues 1-31 (MGRRRAPGGGSLGRVLIRQQTQRSRSHRHTD). Phosphoserine occurs at positions 93 and 97. The CP-type G domain occupies 164-430 (WRQLWRVIER…LCDCPGLVMP (267 aa)). 212–215 (NKAD) is a GTP binding site. The interval 253 to 345 (KEEVDSVAGD…KNAENQQVNN (93 aa)) is disordered. Over residues 302-326 (CQEDEEEDWQTCSEEDSVPEEEEGC) the composition is skewed to acidic residues. Residues 379 to 386 (GYPNVGKS) and 423 to 426 (DCPG) contribute to the GTP site. Residues 618 to 644 (VPGKPWKKHGNRNKKEKSRRLYKHLDV) are disordered. Positions 622 to 644 (PWKKHGNRNKKEKSRRLYKHLDV) are enriched in basic residues.

Belongs to the TRAFAC class YlqF/YawG GTPase family. LSG1 subfamily.

The protein localises to the cytoplasm. It localises to the endoplasmic reticulum. The protein resides in the nucleus. Its subcellular location is the cajal body. It carries out the reaction GTP + H2O = GDP + phosphate + H(+). Its function is as follows. Functions as a GTPase. May act by mediating the release of NMD3 from the 60S ribosomal subunit after export into the cytoplasm during the 60S ribosomal subunit maturation. The sequence is that of Large subunit GTPase 1 homolog from Mus musculus (Mouse).